The sequence spans 171 residues: Putative phosphoesterase ABC1741 (171 aa).

The Proton donor role is filled by H34. 2 short sequence motifs (HXTX) span residues 34-37 (HITL) and 116-119 (HITI). H116 serves as the catalytic Proton acceptor.

It belongs to the 2H phosphoesterase superfamily. YjcG family.

In Shouchella clausii (strain KSM-K16) (Alkalihalobacillus clausii), this protein is Putative phosphoesterase ABC1741.